Here is a 309-residue protein sequence, read N- to C-terminus: 2-phospho-L-lactate transferase (309 aa).

7,8-didemethyl-8-hydroxy-5-deazariboflavin contacts are provided by aspartate 50 and lysine 89.

Belongs to the CofD family. Homodimer. The cofactor is Mg(2+).

It carries out the reaction (2S)-lactyl-2-diphospho-5'-guanosine + 7,8-didemethyl-8-hydroxy-5-deazariboflavin = oxidized coenzyme F420-0 + GMP + H(+). The protein operates within cofactor biosynthesis; coenzyme F420 biosynthesis. Functionally, catalyzes the transfer of the 2-phospholactate moiety from (2S)-lactyl-2-diphospho-5'-guanosine to 7,8-didemethyl-8-hydroxy-5-deazariboflavin (FO) with the formation of oxidized coenzyme F420-0 and GMP. The protein is 2-phospho-L-lactate transferase of Methanococcus maripaludis (strain C6 / ATCC BAA-1332).